Reading from the N-terminus, the 471-residue chain is Putative multidrug resistance protein MdtD (471 aa).

Transmembrane regions (helical) follow at residues 12-32, 49-69, 72-92, 101-123, 138-158, 165-185, 195-215, 220-240, 265-285, 286-306, 342-362, 393-413, and 431-451; these read LWIV…VNTA, MVIV…GWMA, IGVR…SLFC, LVMS…RLTV, FVTL…GILV, WIFL…LWLM, FDIF…LALD, LGIS…SILW, IGLF…FMTP, VFLQ…MIPM, LVFM…VLFF, LLSM…GLLL, and VFLY…LIFA.

It belongs to the major facilitator superfamily. TCR/Tet family.

It localises to the cell inner membrane. The protein is Putative multidrug resistance protein MdtD of Enterobacter sp. (strain 638).